Consider the following 171-residue polypeptide: L-methionine sulfoximine/L-methionine sulfone acetyltransferase (171 aa).

Residues 1–163 (MTIRFADKAD…DLTFMQLQLD (163 aa)) enclose the N-acetyltransferase domain. Substrate contacts are provided by residues 72–74 (RSF) and 82–84 (EHS). Acetyl-CoA-binding positions include 85–87 (VYV), 93–98 (GKGLGR), asparagine 124, and serine 133.

In terms of assembly, homodimer.

It carries out the reaction L-methionine sulfoximine + acetyl-CoA = N-acetyl-L-methionine sulfoximine + CoA + H(+). It catalyses the reaction L-methionine sulfone + acetyl-CoA = N-acetyl-L-methionine sulfone + CoA + H(+). Plays a role in the resistance against the toxic effects of L-methionine sulfoximine (MSX), a rare amino acid which inhibits glutamine synthetase (GlnA). Catalyzes the acetylation of MSX. It can also use L-methionine sulfone (MSO). Also catalyzes the acylation of free L-amino acids using an acyl-CoA as acyl donor. The protein is L-methionine sulfoximine/L-methionine sulfone acetyltransferase (yncA) of Salmonella typhimurium (strain LT2 / SGSC1412 / ATCC 700720).